The chain runs to 388 residues: Succinate--CoA ligase [ADP-forming] subunit beta (388 aa).

Residues 9 to 244 (KELFRTYGIP…TDEEDPLEVE (236 aa)) form the ATP-grasp domain. ATP contacts are provided by residues K46, 53-55 (GRG), E99, V102, and E107. Mg(2+)-binding residues include N199 and D213. Substrate is bound by residues N264 and 321 to 323 (GIL).

This sequence belongs to the succinate/malate CoA ligase beta subunit family. In terms of assembly, heterotetramer of two alpha and two beta subunits. Mg(2+) serves as cofactor.

The enzyme catalyses succinate + ATP + CoA = succinyl-CoA + ADP + phosphate. The catalysed reaction is GTP + succinate + CoA = succinyl-CoA + GDP + phosphate. It functions in the pathway carbohydrate metabolism; tricarboxylic acid cycle; succinate from succinyl-CoA (ligase route): step 1/1. In terms of biological role, succinyl-CoA synthetase functions in the citric acid cycle (TCA), coupling the hydrolysis of succinyl-CoA to the synthesis of either ATP or GTP and thus represents the only step of substrate-level phosphorylation in the TCA. The beta subunit provides nucleotide specificity of the enzyme and binds the substrate succinate, while the binding sites for coenzyme A and phosphate are found in the alpha subunit. The protein is Succinate--CoA ligase [ADP-forming] subunit beta of Desulfosudis oleivorans (strain DSM 6200 / JCM 39069 / Hxd3) (Desulfococcus oleovorans).